The sequence spans 481 residues: Proline--tRNA ligase (481 aa).

Belongs to the class-II aminoacyl-tRNA synthetase family. ProS type 3 subfamily. Homodimer.

It localises to the cytoplasm. It catalyses the reaction tRNA(Pro) + L-proline + ATP = L-prolyl-tRNA(Pro) + AMP + diphosphate. Functionally, catalyzes the attachment of proline to tRNA(Pro) in a two-step reaction: proline is first activated by ATP to form Pro-AMP and then transferred to the acceptor end of tRNA(Pro). The polypeptide is Proline--tRNA ligase (Chlorobium phaeobacteroides (strain BS1)).